The following is a 145-amino-acid chain: Holo-[acyl-carrier-protein] synthase (145 aa).

The Mg(2+) site is built by D8 and E59.

The protein belongs to the P-Pant transferase superfamily. AcpS family. Mg(2+) is required as a cofactor.

It localises to the cytoplasm. The catalysed reaction is apo-[ACP] + CoA = holo-[ACP] + adenosine 3',5'-bisphosphate + H(+). Transfers the 4'-phosphopantetheine moiety from coenzyme A to a Ser of acyl-carrier-protein. The polypeptide is Holo-[acyl-carrier-protein] synthase (Granulibacter bethesdensis (strain ATCC BAA-1260 / CGDNIH1)).